The chain runs to 662 residues: Transketolase (662 aa).

H28 provides a ligand contact to substrate. Thiamine diphosphate-binding positions include H68 and 115-117; that span reads GPL. D156 lines the Mg(2+) pocket. The thiamine diphosphate site is built by G157 and N186. N186 and I188 together coordinate Mg(2+). The substrate site is built by H261, R356, and S383. H261 lines the thiamine diphosphate pocket. E410 (proton donor) is an active-site residue. Position 436 (F436) interacts with thiamine diphosphate. The substrate site is built by H460, D468, and R519.

Belongs to the transketolase family. In terms of assembly, homodimer. Mg(2+) serves as cofactor. It depends on Ca(2+) as a cofactor. Mn(2+) is required as a cofactor. The cofactor is Co(2+). Requires thiamine diphosphate as cofactor.

The catalysed reaction is D-sedoheptulose 7-phosphate + D-glyceraldehyde 3-phosphate = aldehydo-D-ribose 5-phosphate + D-xylulose 5-phosphate. The protein operates within carbohydrate biosynthesis; Calvin cycle. It functions in the pathway carbohydrate degradation; pentose phosphate pathway. In terms of biological role, catalyzes the transfer of a two-carbon ketol group from a ketose donor to an aldose acceptor, via a covalent intermediate with the cofactor thiamine pyrophosphate. This is Transketolase (tkt) from Staphylococcus epidermidis (strain ATCC 12228 / FDA PCI 1200).